The following is a 253-amino-acid chain: Acidic endochitinase Q (253 aa).

The first 24 residues, 1–24 (MEFSGSPMALFCCVFFLFLTGSLA), serve as a signal peptide directing secretion. Glu-92 acts as the Proton donor in catalysis. Cys-212 and Cys-244 are joined by a disulfide.

Belongs to the glycosyl hydrolase 19 family. Chitinase class I subfamily.

It localises to the secreted. The enzyme catalyses Random endo-hydrolysis of N-acetyl-beta-D-glucosaminide (1-&gt;4)-beta-linkages in chitin and chitodextrins.. Functionally, defense against chitin-containing fungal pathogens. The polypeptide is Acidic endochitinase Q (Nicotiana tabacum (Common tobacco)).